The sequence spans 491 residues: Glutamyl-tRNA(Gln) amidotransferase subunit A (491 aa).

Residues K78 and S158 each act as charge relay system in the active site. S182 serves as the catalytic Acyl-ester intermediate.

This sequence belongs to the amidase family. GatA subfamily. Heterotrimer of A, B and C subunits.

The catalysed reaction is L-glutamyl-tRNA(Gln) + L-glutamine + ATP + H2O = L-glutaminyl-tRNA(Gln) + L-glutamate + ADP + phosphate + H(+). In terms of biological role, allows the formation of correctly charged Gln-tRNA(Gln) through the transamidation of misacylated Glu-tRNA(Gln) in organisms which lack glutaminyl-tRNA synthetase. The reaction takes place in the presence of glutamine and ATP through an activated gamma-phospho-Glu-tRNA(Gln). This chain is Glutamyl-tRNA(Gln) amidotransferase subunit A, found in Bradyrhizobium sp. (strain BTAi1 / ATCC BAA-1182).